A 152-amino-acid chain; its full sequence is Protein Smg homolog (152 aa).

The protein belongs to the Smg family.

This Chromobacterium violaceum (strain ATCC 12472 / DSM 30191 / JCM 1249 / CCUG 213 / NBRC 12614 / NCIMB 9131 / NCTC 9757 / MK) protein is Protein Smg homolog.